A 267-amino-acid polypeptide reads, in one-letter code: Ribosomal RNA large subunit methyltransferase E (267 aa).

S-adenosyl-L-methionine is bound by residues Gly-50, Trp-52, Asp-68, Asp-84, and Asp-109. The Proton acceptor role is filled by Lys-149. Residues 196 to 255 enclose the TRAM domain; sequence PLKIDDKFDVTIKKIGAKGNGIAFVEDFVVFMQDEVKKGENVRIKIVDVKPEFAFAIVIG.

The protein belongs to the class I-like SAM-binding methyltransferase superfamily. RNA methyltransferase RlmE family.

The protein resides in the cytoplasm. It catalyses the reaction uridine(2552) in 23S rRNA + S-adenosyl-L-methionine = 2'-O-methyluridine(2552) in 23S rRNA + S-adenosyl-L-homocysteine + H(+). Functionally, specifically methylates the uridine in position 2552 of 23S rRNA at the 2'-O position of the ribose in the fully assembled 50S ribosomal subunit. The protein is Ribosomal RNA large subunit methyltransferase E of Methanococcoides burtonii (strain DSM 6242 / NBRC 107633 / OCM 468 / ACE-M).